A 320-amino-acid chain; its full sequence is uncharacterized protein (320 aa).

The protein to S.pombe SpAC23H3.12c.

This is an uncharacterized protein from Saccharomyces cerevisiae (strain ATCC 204508 / S288c) (Baker's yeast).